A 378-amino-acid polypeptide reads, in one-letter code: Lactosylceramide 1,3-N-acetyl-beta-D-glucosaminyltransferase (378 aa).

The Cytoplasmic segment spans residues 1 to 14 (MRMLVSGRRVKKWQ). A helical; Signal-anchor for type II membrane protein membrane pass occupies residues 15-35 (LIIQLFATCFLASLMFFWEPI). The Lumenal portion of the chain corresponds to 36–378 (DNHIVSHMKS…DTYPCRAAFI (343 aa)). Asn59 carries an N-linked (GlcNAc...) asparagine glycan.

This sequence belongs to the glycosyltransferase 31 family. Widely expressed. Highly expressed in lung, colon, placenta, testis, pituitary gland and cerebellum. Weakly expressed in brain, liver, spleen, lymph node and thymus.

It localises to the golgi apparatus membrane. It catalyses the reaction a beta-D-Gal-(1-&gt;4)-beta-D-Glc-(1&lt;-&gt;1)-Cer(d18:1(4E)) + UDP-N-acetyl-alpha-D-glucosamine = a beta-D-GlcNAc-(1-&gt;3)-beta-D-Gal-(1-&gt;4)-beta-D-Glc-(1&lt;-&gt;1)-Cer(d18:1(4E)) + UDP + H(+). The enzyme catalyses a neolactoside nLc4Cer(d18:1(4E)) + UDP-N-acetyl-alpha-D-glucosamine = a neolactoside IV(3)-beta-GlcNAc-nLc4Cer(d18:1(4E)) + UDP + H(+). It participates in protein modification; protein glycosylation. Its function is as follows. Beta-1,3-N-acetylglucosaminyltransferase that plays a key role in the synthesis of lacto- or neolacto-series carbohydrate chains on glycolipids, notably by participating in biosynthesis of HNK-1 and Lewis X carbohydrate structures. Has strong activity toward lactosylceramide (LacCer) and neolactotetraosylceramide (nLc(4)Cer; paragloboside), resulting in the synthesis of Lc(3)Cer and neolactopentaosylceramide (nLc(5)Cer), respectively. Probably plays a central role in regulating neolacto-series glycolipid synthesis during embryonic development. The sequence is that of Lactosylceramide 1,3-N-acetyl-beta-D-glucosaminyltransferase from Homo sapiens (Human).